The primary structure comprises 294 residues: Acetylglutamate kinase (294 aa).

Residues 67 to 68, Arg-89, and Asn-191 each bind substrate; that span reads GG.

This sequence belongs to the acetylglutamate kinase family. ArgB subfamily.

The protein resides in the cytoplasm. The enzyme catalyses N-acetyl-L-glutamate + ATP = N-acetyl-L-glutamyl 5-phosphate + ADP. It functions in the pathway amino-acid biosynthesis; L-arginine biosynthesis; N(2)-acetyl-L-ornithine from L-glutamate: step 2/4. Catalyzes the ATP-dependent phosphorylation of N-acetyl-L-glutamate. The polypeptide is Acetylglutamate kinase (Methylobacillus flagellatus (strain ATCC 51484 / DSM 6875 / VKM B-1610 / KT)).